A 242-amino-acid polypeptide reads, in one-letter code: Tryptophan synthase alpha chain (242 aa).

Active-site proton acceptor residues include glutamate 31 and aspartate 42.

This sequence belongs to the TrpA family. Tetramer of two alpha and two beta chains.

It carries out the reaction (1S,2R)-1-C-(indol-3-yl)glycerol 3-phosphate + L-serine = D-glyceraldehyde 3-phosphate + L-tryptophan + H2O. Its pathway is amino-acid biosynthesis; L-tryptophan biosynthesis; L-tryptophan from chorismate: step 5/5. The alpha subunit is responsible for the aldol cleavage of indoleglycerol phosphate to indole and glyceraldehyde 3-phosphate. The protein is Tryptophan synthase alpha chain of Staphylococcus aureus (strain MRSA252).